A 127-amino-acid polypeptide reads, in one-letter code: MAKSQIEPGVPITLQELYPSSLFYKEGVSLRVTAMLRGYSVETAIGVIEDGGRSLKINTQNIRDVSFRVGSIYQFIGELHIEQPNNEAILQARTGRNVDGIDMNLYRKTIELLRQFLKEEDNSNMVE.

This sequence belongs to the TEN1 family. Component of the CST complex, composed of CTC1, TEN1 and STN1. Interacts with STN1. No interaction with POT1A, but competes with it for STN1 binding. As to expression, ubiquitous. High expression in meristematic tissues and in vasculature.

It is found in the nucleus. The protein resides in the chromosome. Its subcellular location is the telomere. Required for the maintenance of meristems and stem cells through the reduction of DNA damage. Promotes telomere integrity by maintaining telomere length and proper architecture of the chromosome terminus. Negatively regulates telomerase repeat addition processivity. Hampers contacts between enzymatically active telomerase and CST complex. This chain is CST complex subunit TEN1, found in Arabidopsis thaliana (Mouse-ear cress).